Reading from the N-terminus, the 226-residue chain is Pathogenesis-related protein R major form (226 aa).

The N-terminal stretch at 1–25 (MNFLKSFPFFAFLYFGQYFVAVTHA) is a signal peptide. 8 cysteine pairs are disulfide-bonded: cysteine 34/cysteine 225, cysteine 75/cysteine 85, cysteine 90/cysteine 96, cysteine 140/cysteine 214, cysteine 145/cysteine 197, cysteine 153/cysteine 163, cysteine 167/cysteine 176, and cysteine 177/cysteine 184.

Belongs to the thaumatin family.

The protein localises to the vacuole. The protein is Pathogenesis-related protein R major form of Nicotiana tabacum (Common tobacco).